A 22-amino-acid polypeptide reads, in one-letter code: Large ribosomal subunit protein bL32 (22 aa).

Residues 1–22 (CVPKRKVSPSXRNMRXAHDXLT) are disordered.

This sequence belongs to the bacterial ribosomal protein bL32 family.

The protein is Large ribosomal subunit protein bL32 (rpmF) of Brevundimonas vesicularis (Pseudomonas vesicularis).